The sequence spans 157 residues: uncharacterized protein (157 aa).

This is an uncharacterized protein from Acidianus hospitalis (AFV-1).